The primary structure comprises 469 residues: Deoxyribodipyrimidine photo-lyase (469 aa).

Residues 1–133 (MRLVWFRRDL…IWSAFDDKCV (133 aa)) form the Photolyase/cryptochrome alpha/beta domain. Glu107 serves as a coordination point for (6R)-5,10-methylene-5,6,7,8-tetrahydrofolate.

It belongs to the DNA photolyase class-1 family. As to quaternary structure, monomer. It depends on FAD as a cofactor. The cofactor is (6R)-5,10-methylene-5,6,7,8-tetrahydrofolate.

The enzyme catalyses cyclobutadipyrimidine (in DNA) = 2 pyrimidine residues (in DNA).. In terms of biological role, involved in repair of UV radiation-induced DNA damage. Catalyzes the light-dependent monomerization (300-600 nm) of cyclobutyl pyrimidine dimers (in cis-syn configuration), which are formed between adjacent bases on the same DNA strand upon exposure to ultraviolet radiation. This Vibrio cholerae serotype O1 (strain ATCC 39315 / El Tor Inaba N16961) protein is Deoxyribodipyrimidine photo-lyase (phrA).